The sequence spans 57 residues: Large ribosomal subunit protein uL30 (57 aa).

Belongs to the universal ribosomal protein uL30 family. As to quaternary structure, part of the 50S ribosomal subunit.

The chain is Large ribosomal subunit protein uL30 from Maridesulfovibrio salexigens (strain ATCC 14822 / DSM 2638 / NCIMB 8403 / VKM B-1763) (Desulfovibrio salexigens).